We begin with the raw amino-acid sequence, 207 residues long: MTLDKLIEKLAAKSSILITPIIVKDYLAYQVEPNFLLPFLKALKESEELRFTVLTDLFGTDFPERDKRFEVIYNLLSLKLNKRLIIKVYISEKETIPSAMNIFNASCWYEREVYDMYGVNFDGNDDKRRILTDYEFEGHPLRKDFPLTGYTQVKYDEKLKKVAYEPVDLDIEYREFDFSSHWHSPSYVLPGDEKATDVIPAKAGIQK.

Belongs to the complex I 30 kDa subunit family. NDH-1 is composed of 14 different subunits. Subunits NuoB, C, D, E, F, and G constitute the peripheral sector of the complex.

It localises to the cell inner membrane. It catalyses the reaction a quinone + NADH + 5 H(+)(in) = a quinol + NAD(+) + 4 H(+)(out). Its function is as follows. NDH-1 shuttles electrons from NADH, via FMN and iron-sulfur (Fe-S) centers, to quinones in the respiratory chain. The immediate electron acceptor for the enzyme in this species is believed to be ubiquinone. Couples the redox reaction to proton translocation (for every two electrons transferred, four hydrogen ions are translocated across the cytoplasmic membrane), and thus conserves the redox energy in a proton gradient. This Rickettsia felis (strain ATCC VR-1525 / URRWXCal2) (Rickettsia azadi) protein is NADH-quinone oxidoreductase subunit C.